We begin with the raw amino-acid sequence, 175 residues long: Ribosome maturation factor RimM (175 aa).

Residues 96 to 175 enclose the PRC barrel domain; that stretch reads EEDFYWRDLI…LIQVNWEPDF (80 aa).

Belongs to the RimM family. As to quaternary structure, binds ribosomal protein uS19.

It localises to the cytoplasm. In terms of biological role, an accessory protein needed during the final step in the assembly of 30S ribosomal subunit, possibly for assembly of the head region. Essential for efficient processing of 16S rRNA. May be needed both before and after RbfA during the maturation of 16S rRNA. It has affinity for free ribosomal 30S subunits but not for 70S ribosomes. The sequence is that of Ribosome maturation factor RimM from Psychromonas ingrahamii (strain DSM 17664 / CCUG 51855 / 37).